A 128-amino-acid polypeptide reads, in one-letter code: Transcription antitermination protein NusB (128 aa).

It belongs to the NusB family.

Functionally, involved in transcription antitermination. Required for transcription of ribosomal RNA (rRNA) genes. Binds specifically to the boxA antiterminator sequence of the ribosomal RNA (rrn) operons. The sequence is that of Transcription antitermination protein NusB from Staphylococcus carnosus (strain TM300).